A 281-amino-acid chain; its full sequence is Apulose-4-phosphate transketolase subunit A (281 aa).

This sequence belongs to the transketolase family. As to quaternary structure, probable heterodimer composed of AptA and AptB. Requires thiamine diphosphate as cofactor.

It carries out the reaction apulose 4-phosphate + D-glyceraldehyde 3-phosphate = D-xylulose 5-phosphate + dihydroxyacetone phosphate. Its pathway is carbohydrate metabolism. Involved in catabolism of D-apiose. Catalyzes the transfer of the glycolaldehyde group from apulose-4-phosphate to D-glyceraldehyde 3-phosphate, generating dihydroxyacetone phosphate and D-xylulose-5-phosphate. This Phocaeicola vulgatus (strain ATCC 8482 / DSM 1447 / JCM 5826 / CCUG 4940 / NBRC 14291 / NCTC 11154) (Bacteroides vulgatus) protein is Apulose-4-phosphate transketolase subunit A.